The primary structure comprises 62 residues: MALDGSSGGGSNVETLLIVAIVVVIMAIMLYYFWWMPRQQQKKCSKAEECTCTNGSCSLKTS.

The chain crosses the membrane as a helical span at residues 16-36 (LLIVAIVVVIMAIMLYYFWWM).

The protein belongs to the asfivirus inner membrane protein p12 family. In terms of assembly, homomultimer; disulfide-linked. In terms of processing, not glycosylated.

The protein localises to the virion membrane. The chain is Inner membrane protein p12 from African swine fever virus (isolate Pig/Kenya/KEN-50/1950) (ASFV).